Consider the following 446-residue polypeptide: MGPLLQLAGTRLHIGIDDTDSIKGMCTTYLGFRLARLLQKEGAEFEDYPRLVRLNPNVPWKTRGNGAVGMTVNVSDPEAARKIAIDAVSLYSDLENGANPAAVFCEGGIPQPVRDLSREALHVMVEQERARGIIERHCSGLFYTGSGQGMVGAAAAIGYEFGDSTLELLSYRREENRGTPRPIWPEDVRGIQGAYPDTFNSYDEARGTSIIAPRGPDPVFYGIRGELASSLLGASEMVRTPERLEGYMIYRSNQGTADHLEYVIDAADPRPYSSGTISGVISTEPVVREGGHVFFEINAGGSMVPCAVYKESGMTDAAALLRGGDKVVVGGGIRRESGSHPKVLNVEFARVERLARIYRMANPYCTKCSKSMKSKGIGQGFKCTRCGAASIHRVEREIPRGISVGLYLPVASSQRHLARPYGRQGRTSRIQFDGASPWLGVFDSGE.

This sequence belongs to the TiaS family.

Its subcellular location is the cytoplasm. It carries out the reaction cytidine(34) in tRNA(Ile2) + agmatine + ATP + H2O = 2-agmatinylcytidine(34) in tRNA(Ile2) + AMP + 2 phosphate + 2 H(+). In terms of biological role, ATP-dependent agmatine transferase that catalyzes the formation of 2-agmatinylcytidine (agm2C) at the wobble position (C34) of tRNA(Ile2), converting the codon specificity from AUG to AUA. This is tRNA(Ile2) 2-agmatinylcytidine synthetase TiaS from Cenarchaeum symbiosum (strain A).